Consider the following 431-residue polypeptide: UPF0597 protein TDE_2144 (431 aa).

The protein belongs to the UPF0597 family.

This is UPF0597 protein TDE_2144 from Treponema denticola (strain ATCC 35405 / DSM 14222 / CIP 103919 / JCM 8153 / KCTC 15104).